Reading from the N-terminus, the 745-residue chain is Junction plakoglobin (745 aa).

Residue methionine 1 is modified to N-acetylmethionine. Threonine 14 carries an O-linked (GlcNAc) threonine glycan. A phosphoserine mark is found at serine 99 and serine 125. ARM repeat units lie at residues 132–171, 172–215, 216–255, 258–297, 298–341, 342–381, 383–420, 423–464, 470–510, 512–551, 574–613, and 615–661; these read NYQD…QLSK, KEAS…LSHH, REGL…NLLL, EGAK…LLAY, GNQE…LSVC, PSNK…NLSD, ATKQ…NLTC, SKNK…HLTS, EMAQ…NLAL, PANH…QPYT, PMNR…ELAQ, and KEAA…PDYR. The segment at 132 to 297 is interaction with DSC1 and DSG1; sequence NYQDDAELAT…TTDCLQLLAY (166 aa). Phosphoserine is present on serine 182. The segment at 574–661 is interaction with DSC1; the sequence is PMNRMEIFRL…ISEDKNPDYR (88 aa). Residues serine 665 and serine 730 each carry the phosphoserine modification.

The protein belongs to the beta-catenin family. In terms of assembly, homodimer. Component of an E-cadherin/catenin adhesion complex composed of at least E-cadherin/CDH1 and gamma-catenin/JUP, and possibly alpha-catenin/CTNNA1; the complex is located to adherens junctions. The stable association of CTNNA1 is controversial as CTNNA1 was shown not to bind to F-actin when assembled in the complex. Interacts with MUC1. Interacts with CAV1. Interacts with PTPRJ. Interacts with DSG1. Interacts with DSC1 and DSC2. Interacts with PKP2. Interacts with PKP3 (via N-terminus); the interaction is required for PKP3 localization to desmosome cell-cell junctions. Interacts with DSG4. Post-translationally, may be phosphorylated by FER. As to expression, expressed in the heart (at protein level).

The protein localises to the cell junction. It is found in the adherens junction. The protein resides in the desmosome. Its subcellular location is the cytoplasm. It localises to the cytoskeleton. The protein localises to the cell membrane. It is found in the nucleus. Its function is as follows. Common junctional plaque protein. The membrane-associated plaques are architectural elements in an important strategic position to influence the arrangement and function of both the cytoskeleton and the cells within the tissue. The presence of plakoglobin in both the desmosomes and in the intermediate junctions suggests that it plays a central role in the structure and function of submembranous plaques. Acts as a substrate for VE-PTP and is required by it to stimulate VE-cadherin function in endothelial cells. Can replace beta-catenin in E-cadherin/catenin adhesion complexes which are proposed to couple cadherins to the actin cytoskeleton. The protein is Junction plakoglobin of Homo sapiens (Human).